The sequence spans 358 residues: Uroporphyrinogen decarboxylase (358 aa).

Substrate-binding positions include 29 to 33 (RQAGR), Asp79, Tyr156, Thr211, and His329.

This sequence belongs to the uroporphyrinogen decarboxylase family. In terms of assembly, homodimer.

The protein localises to the cytoplasm. It catalyses the reaction uroporphyrinogen III + 4 H(+) = coproporphyrinogen III + 4 CO2. It participates in porphyrin-containing compound metabolism; protoporphyrin-IX biosynthesis; coproporphyrinogen-III from 5-aminolevulinate: step 4/4. Catalyzes the decarboxylation of four acetate groups of uroporphyrinogen-III to yield coproporphyrinogen-III. The sequence is that of Uroporphyrinogen decarboxylase from Idiomarina loihiensis (strain ATCC BAA-735 / DSM 15497 / L2-TR).